The chain runs to 382 residues: uncharacterized protein (382 aa).

Positions 1–92 (MQFLSVIPEQ…GATAYRNTEF (92 aa)) constitute a PE domain. A run of 8 helical transmembrane segments spans residues 23–43 (SALSASYAAAAGPTTAVVSAA), 155–175 (AAVAPLPSAGAGLAQVVNGVV), 203–223 (FIVAGQSALTGVALLQPAVVG), 230–250 (TFLTAGTSAATGLGLLTLAGV), 261–281 (LASGTAATGLGLLGSAGVQLF), 284–304 (AFLLAVPTALGGVGSLAIAVV), 315–335 (LVVPNVVAGIAALQTAGAQFA), and 347–367 (LGAPGIAVLQTAGGHFAQGIG).

It belongs to the mycobacterial PE family.

It localises to the cell membrane. This is an uncharacterized protein from Mycobacterium bovis (strain ATCC BAA-935 / AF2122/97).